The sequence spans 196 residues: Ribonuclease HII (196 aa).

The region spanning Gly9–Leu196 is the RNase H type-2 domain. Residues Asp15, Glu16, and Asp107 each coordinate a divalent metal cation.

This sequence belongs to the RNase HII family. Mn(2+) serves as cofactor. It depends on Mg(2+) as a cofactor.

Its subcellular location is the cytoplasm. It carries out the reaction Endonucleolytic cleavage to 5'-phosphomonoester.. In terms of biological role, endonuclease that specifically degrades the RNA of RNA-DNA hybrids. This is Ribonuclease HII from Dechloromonas aromatica (strain RCB).